The primary structure comprises 320 residues: Cytochrome f (320 aa).

Residues 1-35 (MQTRNNFSWIKEQITRSISVSLMIYIITRASISNA) form the signal peptide. The heme site is built by tyrosine 36, cysteine 56, cysteine 59, and histidine 60. Residues 286 to 306 (VQGLLFFLASVILAQIFLVLK) traverse the membrane as a helical segment.

Belongs to the cytochrome f family. The 4 large subunits of the cytochrome b6-f complex are cytochrome b6, subunit IV (17 kDa polypeptide, petD), cytochrome f and the Rieske protein, while the 4 small subunits are PetG, PetL, PetM and PetN. The complex functions as a dimer. It depends on heme as a cofactor.

It is found in the plastid. The protein resides in the chloroplast thylakoid membrane. Functionally, component of the cytochrome b6-f complex, which mediates electron transfer between photosystem II (PSII) and photosystem I (PSI), cyclic electron flow around PSI, and state transitions. The protein is Cytochrome f of Lactuca sativa (Garden lettuce).